The sequence spans 375 residues: MVEIGMGRVARRTYELREISIVPSRRTRSSKDVSTAWQLDAYRFEIPVVAHPTDALVSPEFAIELGRLGGLGVLNGEGLIGRHADVGAKVAQLIEAAEKEPEPATAVCLLQELHAAPLNPDLLGSAVARIREAGVTTAVRVSPQNAQVLTPVLLAAGIDLLVVQGSIVSAECVASGGEPLNLKTFISELDVPVVAGGVLDHRTALHLMRTGAAGVIVGYGSTRGATTSDEVLGISVPMATAIADAAAARREYLDETGGRYVHVLADGDIYTSGELAKAIACGADAVVLGTPLAQSAEALGGGWFWPAAAAHPSLPRGALLQTAVGERPSLQQVLNGPSDNPFGTLNLVGGLRRSMAKAGYCDLKEFQKVGLIVSI.

Belongs to the IMPDH/GMPR family.

This is an uncharacterized protein from Mycobacterium leprae (strain TN).